The sequence spans 176 residues: Nucleoside triphosphate/diphosphate phosphatase (176 aa).

The active-site Proton donor is Arg-23. Mg(2+)-binding residues include Asn-87, Asp-103, Asp-105, Asp-107, Asp-120, and Glu-123.

Belongs to the Ntdp family. Mg(2+) is required as a cofactor.

It catalyses the reaction a ribonucleoside 5'-triphosphate + H2O = a ribonucleoside 5'-diphosphate + phosphate + H(+). The enzyme catalyses a ribonucleoside 5'-diphosphate + H2O = a ribonucleoside 5'-phosphate + phosphate + H(+). Has nucleoside phosphatase activity towards nucleoside triphosphates and nucleoside diphosphates. The protein is Nucleoside triphosphate/diphosphate phosphatase of Bacillus licheniformis (strain ATCC 14580 / DSM 13 / JCM 2505 / CCUG 7422 / NBRC 12200 / NCIMB 9375 / NCTC 10341 / NRRL NRS-1264 / Gibson 46).